Consider the following 311-residue polypeptide: Pyrimidine-specific ribonucleoside hydrolase RihA (311 aa).

The active site involves His-240.

Belongs to the IUNH family. RihA subfamily.

Hydrolyzes cytidine or uridine to ribose and cytosine or uracil, respectively. The sequence is that of Pyrimidine-specific ribonucleoside hydrolase RihA from Salmonella dublin (strain CT_02021853).